A 156-amino-acid chain; its full sequence is Small ribosomal subunit protein uS7c (156 aa).

It belongs to the universal ribosomal protein uS7 family. As to quaternary structure, part of the 30S ribosomal subunit.

It localises to the plastid. The protein localises to the chloroplast. Its function is as follows. One of the primary rRNA binding proteins, it binds directly to 16S rRNA where it nucleates assembly of the head domain of the 30S subunit. This chain is Small ribosomal subunit protein uS7c (rps7), found in Cyanidium caldarium (Red alga).